A 311-amino-acid polypeptide reads, in one-letter code: Formimidoylglutamase (311 aa).

Mn(2+) contacts are provided by histidine 122, aspartate 151, histidine 153, aspartate 155, cysteine 242, and aspartate 244.

Belongs to the arginase family. Requires Mn(2+) as cofactor.

It carries out the reaction N-formimidoyl-L-glutamate + H2O = formamide + L-glutamate. The protein operates within amino-acid degradation; L-histidine degradation into L-glutamate; L-glutamate from N-formimidoyl-L-glutamate (hydrolase route): step 1/1. In terms of biological role, catalyzes the conversion of N-formimidoyl-L-glutamate to L-glutamate and formamide. The polypeptide is Formimidoylglutamase (Pseudomonas aeruginosa (strain UCBPP-PA14)).